The sequence spans 662 residues: MTSKAVVFAYHDIGCTGIEALLNAGYEIAAVFTHADDPRENTFYASVARLCAERGIPLHAPEDVNHPLWLERIRQLRPDFLFSFYYRRLLGAELLACAARGAYNLHGSLLPRYRGRAPANWVLVNGETQTGVTLHRMIERADAGPILAQQAVAIDPEDTALSLHGKLRKAAGALLRDSLPLLALGVLPEVEQDESQASHFGRRTPADGLLDWHRPARQLYDLVRAVTQPYPGAFCQVGEQKLIVWSAEVVAGNHGREPGSVLSCDPLRIACGEDSLVLRFGQRGERGLYLAGTQLATELGLVEGARLRGAACSPQRRTRVLILGVNGFIGNHLSERLLRDGRYEVHGMDIGSDAIERLKADPHFHFVEGDIGIHSEWLEYHVKKCDVILPLVAIATPIEYTRNPLRVFELDFEENLRIVRYCVKYGKRVVFPSTSEVYGMCQDPDFDEDRSNLVVGPINKQRWIYSVSKQLLDRVIWAYGQQGLRFTLFRPFNWMGPRLDRLDSARIGSSRAITQLILHLVEGTPIRLVDGGAQKRCFTDVDDGIEALARIIDNRDGRCDGQIVNIGNPDNEASIRQLGEELLRQFEAHPLRAQFPPFAGFREVESRSFYGDGYQDVAHRKPSIDNARRLLDWQPTIELRETIGKTLDFFLHEALREREAQA.

Positions 1-307 (MTSKAVVFAY…ELGLVEGARL (307 aa)) are formyltransferase ArnAFT. His-106 acts as the Proton donor; for formyltransferase activity in catalysis. (6R)-10-formyltetrahydrofolate is bound by residues Arg-116 and 138-142 (IERAD). Residues 316–662 (RRTRVLILGV…EALREREAQA (347 aa)) are dehydrogenase ArnADH. NAD(+) is bound by residues Asp-349 and 370–371 (DI). Residues Ala-395, Tyr-400, and 434-435 (TS) contribute to the UDP-alpha-D-glucuronate site. The active-site Proton acceptor; for decarboxylase activity is Glu-436. UDP-alpha-D-glucuronate contacts are provided by residues Arg-462, Asn-493, 527-536 (RLVDGGAQKR), and Tyr-614. The active-site Proton donor; for decarboxylase activity is Arg-620.

It in the N-terminal section; belongs to the Fmt family. UDP-L-Ara4N formyltransferase subfamily. In the C-terminal section; belongs to the NAD(P)-dependent epimerase/dehydratase family. UDP-glucuronic acid decarboxylase subfamily. Homohexamer, formed by a dimer of trimers.

The enzyme catalyses UDP-alpha-D-glucuronate + NAD(+) = UDP-beta-L-threo-pentopyranos-4-ulose + CO2 + NADH. It catalyses the reaction UDP-4-amino-4-deoxy-beta-L-arabinose + (6R)-10-formyltetrahydrofolate = UDP-4-deoxy-4-formamido-beta-L-arabinose + (6S)-5,6,7,8-tetrahydrofolate + H(+). It participates in nucleotide-sugar biosynthesis; UDP-4-deoxy-4-formamido-beta-L-arabinose biosynthesis; UDP-4-deoxy-4-formamido-beta-L-arabinose from UDP-alpha-D-glucuronate: step 1/3. It functions in the pathway nucleotide-sugar biosynthesis; UDP-4-deoxy-4-formamido-beta-L-arabinose biosynthesis; UDP-4-deoxy-4-formamido-beta-L-arabinose from UDP-alpha-D-glucuronate: step 3/3. Its pathway is bacterial outer membrane biogenesis; lipopolysaccharide biosynthesis. In terms of biological role, bifunctional enzyme that catalyzes the oxidative decarboxylation of UDP-glucuronic acid (UDP-GlcUA) to UDP-4-keto-arabinose (UDP-Ara4O) and the addition of a formyl group to UDP-4-amino-4-deoxy-L-arabinose (UDP-L-Ara4N) to form UDP-L-4-formamido-arabinose (UDP-L-Ara4FN). The modified arabinose is attached to lipid A and is required for resistance to polymyxin and cationic antimicrobial peptides. In Pseudomonas aeruginosa (strain ATCC 15692 / DSM 22644 / CIP 104116 / JCM 14847 / LMG 12228 / 1C / PRS 101 / PAO1), this protein is Bifunctional polymyxin resistance protein ArnA.